We begin with the raw amino-acid sequence, 35 residues long: Tau-theraphotoxin-Pc1b (35 aa).

3 disulfides stabilise this stretch: Cys-3/Cys-17, Cys-10/Cys-22, and Cys-16/Cys-29. At Phe-35 the chain carries Phenylalanine amide.

Belongs to the neurotoxin 10 (Hwtx-1) family. 62 (Vatx) subfamily. As to expression, expressed by the venom gland.

It localises to the secreted. Selectively activates the mammalian capsaicin receptor TRPV1, a non-selective cation channel expressed by sensory neurons of the pain pathway. Is more potent than VaTx1, but less potent than VaTx3. Interacts with distinct regions of the channel than capsaicin, since it only acts on the extracellular face of the channel, and capsaicin binds to the cytosolic side. Also activates avian TRPV1, which is insensitive to capsaicin. Produce weak inhibition on potassium channels Kv2.1/KCNB1. The protein is Tau-theraphotoxin-Pc1b of Psalmopoeus cambridgei (Trinidad chevron tarantula).